Consider the following 493-residue polypeptide: Glutamate--tRNA ligase (493 aa).

The 'HIGH' region motif lies at 10-20 (PSPTGDPHVGT). The 'KMSKS' region motif lies at 251–255 (KLSKR). Residue lysine 254 coordinates ATP.

It belongs to the class-I aminoacyl-tRNA synthetase family. Glutamate--tRNA ligase type 1 subfamily. In terms of assembly, monomer.

It is found in the cytoplasm. The enzyme catalyses tRNA(Glu) + L-glutamate + ATP = L-glutamyl-tRNA(Glu) + AMP + diphosphate. Catalyzes the attachment of glutamate to tRNA(Glu) in a two-step reaction: glutamate is first activated by ATP to form Glu-AMP and then transferred to the acceptor end of tRNA(Glu). This is Glutamate--tRNA ligase from Pseudomonas fluorescens (strain Pf0-1).